Consider the following 942-residue polypeptide: Homeobox transcription factor phx1 (942 aa).

Composition is skewed to polar residues over residues 1-19 (MRSY…NINY), 61-73 (HLQG…TNPN), 99-116 (ADNN…TNPS), and 122-135 (IVKS…SKQN). 5 disordered regions span residues 1–54 (MRSY…MQLP), 61–80 (HLQG…PEFD), 87–172 (KQEK…KKQR), 604–651 (WANQ…STST), and 892–922 (SSSG…DVYS). Residues 142–151 (SVEKAKENVA) are compositionally biased toward basic and acidic residues. The span at 153–164 (ESGTPESGGSTS) shows a compositional bias: low complexity. Residues 164–224 (SAPKSKKQRL…QNRRAKSKLI (61 aa)) constitute a DNA-binding region (homeobox). Polar residues-rich tracts occupy residues 604–614 (WANQLPRQPDS) and 630–641 (SHDTSSEYGNKS).

It localises to the nucleus. Its function is as follows. Trnascription factor that regulates the expression of the homocitrate synthase (HCS) lys4. The sequence is that of Homeobox transcription factor phx1 (phx1) from Schizosaccharomyces pombe (strain 972 / ATCC 24843) (Fission yeast).